The primary structure comprises 128 residues: Large ribosomal subunit protein bL17 (128 aa).

The protein belongs to the bacterial ribosomal protein bL17 family. As to quaternary structure, part of the 50S ribosomal subunit. Contacts protein L32.

This Streptococcus pneumoniae serotype 2 (strain D39 / NCTC 7466) protein is Large ribosomal subunit protein bL17.